Here is a 466-residue protein sequence, read N- to C-terminus: FAD-dependent monooxygenase dpfgE (466 aa).

The N-terminal stretch at 1-23 (MSQKPFRVIIVGGSVTGLTLAHS) is a signal peptide. The FAD site is built by Glu35, Gly49, and Arg108. N-linked (GlcNAc...) asparagine glycosylation is found at Asn128 and Asn192. Positions 312 and 325 each coordinate FAD. N-linked (GlcNAc...) asparagine glycosylation occurs at Asn376. A helical transmembrane segment spans residues 443 to 465 (GVVRNVFFLLAATVIVAWVCRLW).

Belongs to the paxM FAD-dependent monooxygenase family. Requires FAD as cofactor.

The protein resides in the membrane. Its pathway is secondary metabolite biosynthesis; terpenoid biosynthesis. FAD-dependent monooxygenase; part of the gene cluster that mediates the biosynthesis of diterpenoid pyrones. The first step of the pathway is the synthesis of the alpha-pyrone moiety by the polyketide synthase dpfgA via condensation of one acetyl-CoA starter unit with 3 malonyl-CoA units and 2 methylations. The alpha-pyrone is then combined with geranylgeranyl pyrophosphate (GGPP) formed by the GGPP synthase dpfgD through the action of the prenyltransferase dpfgC to yield a linear alpha-pyrone diterpenoid. Subsequent steps in the diterpenoid pyrone biosynthetic pathway involve the decalin core formation, which is initiated by the epoxidation of the C10-C11 olefin by the FAD-dependent oxidoreductase dpfgE, and is followed by a cyclization cascade catalyzed by the terpene cyclase dpfgB. The short chain dehydrogenase/reductase dpfgG then oxidizes the 8S hydroxy group to a ketone and the short chain dehydrogenase/reductase dpfgH reduces the ketone to the 8R hydroxy group to yield higginsianin B. Higginsianin B is further methylated by the methyltransferase dpfgI to produce the intermediate named FDDP B. The cytochrome P450 monooxygenase dfgpJ then catalyzes a three-step oxidation at C-27 to generate a carboxylic acid as well as C-26 hydroxylation. Finally, methyltransferase dpfgK methylates the carboxylic acid generated by dpfgJ, yielding the final diterpenoid pyrones from the pathway which were named FDDP D and FDDP E. The sequence is that of FAD-dependent monooxygenase dpfgE from Gibberella zeae (strain ATCC MYA-4620 / CBS 123657 / FGSC 9075 / NRRL 31084 / PH-1) (Wheat head blight fungus).